The chain runs to 210 residues: Large ribosomal subunit protein uL3 (210 aa).

The disordered stretch occupies residues 122 to 155 (NQKRNNFGRGPMSHGSKNHRAPGSIGAGTTPGRV).

The protein belongs to the universal ribosomal protein uL3 family. Part of the 50S ribosomal subunit. Forms a cluster with proteins L14 and L19.

Its function is as follows. One of the primary rRNA binding proteins, it binds directly near the 3'-end of the 23S rRNA, where it nucleates assembly of the 50S subunit. The chain is Large ribosomal subunit protein uL3 from Nostoc punctiforme (strain ATCC 29133 / PCC 73102).